A 500-amino-acid chain; its full sequence is NAD(P)H-quinone oxidoreductase chain 4, chloroplastic (500 aa).

The next 14 membrane-spanning stretches (helical) occupy residues 4 to 24 (FPWL…MLFL), 35 to 55 (YTIC…CYNF), 87 to 107 (IGTI…AFPV), 113 to 130 (LFHF…GSFS), 134 to 154 (LLLF…LLAM), 167 to 187 (FILY…GLSL), 211 to 231 (ILFY…IPLH), 242 to 262 (HYST…YGLV), 272 to 292 (AHSM…IYAA), 305 to 325 (IAYS…SITD), 330 to 350 (GAIL…FLAG), 386 to 406 (LALP…GIIT), 416 to 436 (ILII…LLSM), and 462 to 482 (LFLS…PDFV).

This sequence belongs to the complex I subunit 4 family.

It localises to the plastid. Its subcellular location is the chloroplast thylakoid membrane. It catalyses the reaction a plastoquinone + NADH + (n+1) H(+)(in) = a plastoquinol + NAD(+) + n H(+)(out). It carries out the reaction a plastoquinone + NADPH + (n+1) H(+)(in) = a plastoquinol + NADP(+) + n H(+)(out). The sequence is that of NAD(P)H-quinone oxidoreductase chain 4, chloroplastic from Lepidium virginicum (Virginia pepperweed).